Here is a 357-residue protein sequence, read N- to C-terminus: Ubiquitin carboxyl-terminal hydrolase 2 (357 aa).

Residues 19–351 (TGLRNLGNTC…DAYLLFYELA (333 aa)) form the USP domain. Catalysis depends on cysteine 28, which acts as the Nucleophile. Zn(2+)-binding residues include cysteine 177, cysteine 180, cysteine 228, and cysteine 231. Histidine 309 functions as the Proton acceptor in the catalytic mechanism.

The protein belongs to the peptidase C19 family. USP2 subfamily. In terms of assembly, homooligomer.

It localises to the cytoplasm. It is found in the perinuclear region. It carries out the reaction Thiol-dependent hydrolysis of ester, thioester, amide, peptide and isopeptide bonds formed by the C-terminal Gly of ubiquitin (a 76-residue protein attached to proteins as an intracellular targeting signal).. In terms of biological role, hydrolase that deubiquitinates polyubiquitinated target proteins such as MDM2, MDM4 and CCND1. Possesses both ubiquitin-specific peptidase and isopeptidase activities. May play a role in the regulation of the circadian clock. This is Ubiquitin carboxyl-terminal hydrolase 2 (USP2) from Gallus gallus (Chicken).